The primary structure comprises 87 residues: Putative phytosulfokines 4 (87 aa).

The first 23 residues, 1–23 (MANLSTLITIALLLCATMLTCSA), serve as a signal peptide directing secretion. Positions 24–77 (RPEPAYFASFTTSPADTLSLEMIESKLHEVAGESCDKEDDEDCLVRRTLTAHLD) are excised as a propeptide. Sulfotyrosine is present on residues tyrosine 78 and tyrosine 80. A propeptide spanning residues 83 to 87 (KNNHH) is cleaved from the precursor.

Belongs to the phytosulfokine family. Post-translationally, sulfation is important for activity and for the binding to a putative membrane receptor.

It is found in the secreted. Functionally, promotes plant cell differentiation, organogenesis and somatic embryogenesis as well as cell proliferation. The protein is Putative phytosulfokines 4 (PSK4) of Arabidopsis thaliana (Mouse-ear cress).